A 373-amino-acid polypeptide reads, in one-letter code: Lipoyl amidotransferase LIPT1, mitochondrial (373 aa).

A mitochondrion-targeting transit peptide spans 1–25 (MLIPLSMKNCFRLLCQHKVPAAGFK). In terms of domain architecture, BPL/LPL catalytic spans 57–243 (LEGKPILFLW…EYAAHHQVDG (187 aa)). (R)-lipoyl-5'-AMP contacts are provided by tyrosine 107, lysine 151, lysine 161, and threonine 179.

Belongs to the LplA family.

The protein localises to the mitochondrion. The enzyme catalyses (R)-lipoyl-5'-AMP + L-lysyl-[lipoyl-carrier protein] = N(6)-[(R)-lipoyl]-L-lysyl-[lipoyl-carrier protein] + AMP + 2 H(+). It carries out the reaction N(6)-[(R)-lipoyl]-L-lysyl-[glycine-cleavage complex H protein] + L-lysyl-[lipoyl-carrier protein] = L-lysyl-[glycine-cleavage complex H protein] + N(6)-[(R)-lipoyl]-L-lysyl-[lipoyl-carrier protein]. The protein operates within protein modification; protein lipoylation via exogenous pathway; protein N(6)-(lipoyl)lysine from lipoate: step 2/2. Functionally, lipoyl amidotransferase that catalyzes the transfer of lipoyl moieties from lipoyl-protein H of the glycine cleavage system (lipoyl-GCSH) to E2 subunits of the pyruvate dehydrogenase complex (PDCE2). Unable to catalyze the transfer of octanoyl from octanoyl-GCSH to PDCE2. In vitro, it is also able to catalyze the transfer of the lipoyl group from lipoyl-AMP to the specific lysine residue of lipoyl domains of lipoate-dependent enzymes but this reaction may not be physiologically relevant. This Mus musculus (Mouse) protein is Lipoyl amidotransferase LIPT1, mitochondrial.